The sequence spans 508 residues: METLLLDGETLTLEQVRAVATGAARAALAPAARERVRRSRALVDARLEDGEAHYGINTGFGTLAEVRIPRADLERLQRNLVLSHAAGVGAPLPLAEARALVLLRANVLAKGVSGIRERTLELLLAMLERGVVPVVPERGSVGASGDLAPLAHLALVLIGDGEAFLAPPGAAAPPERLPGGEALRRAGLEPVVLQPKEGLALVNGTQAMAAVGTLALLRAERLAALADLAGAMTLEGLLGSHRPFAPEIQAARGQPGQIEAAAHLRALLAGSELNASHQGPGCHKVQDPYSLRCMPQVHGAARDGIGFCRGVLAREVNAATDNPLVFPDTGEIVSGGNFHGQPVALALDVLAVAASHLAAISERRVEQLVNPSLSGLPPFLAPQHGLNSGFMIAQVTSAALVSENKVLCHPASVDSIPSSAGREDHVSMGMTAALKARQVVENVRTCLAIELLVAAQALDLRAPLRPAQRVADAHARLRERVPHLSEDRALYRDIEAVSRLVDEGALEL.

The 5-imidazolinone (Ala-Gly) cross-link spans 143 to 145; the sequence is ASG. 2,3-didehydroalanine (Ser) is present on serine 144.

This sequence belongs to the PAL/histidase family. Post-translationally, contains an active site 4-methylidene-imidazol-5-one (MIO), which is formed autocatalytically by cyclization and dehydration of residues Ala-Ser-Gly.

The protein localises to the cytoplasm. It catalyses the reaction L-histidine = trans-urocanate + NH4(+). It functions in the pathway amino-acid degradation; L-histidine degradation into L-glutamate; N-formimidoyl-L-glutamate from L-histidine: step 1/3. This Anaeromyxobacter dehalogenans (strain 2CP-C) protein is Histidine ammonia-lyase.